Reading from the N-terminus, the 295-residue chain is Dehydrodolichyl diphosphate synthase 6 (295 aa).

The protein belongs to the UPP synthase family. Requires Mg(2+) as cofactor.

The protein operates within protein modification; protein glycosylation. Catalyzes cis-prenyl chain elongation to produce the polyprenyl backbone of dolichol, a glycosyl carrier-lipid required for the biosynthesis of several classes of glycoprotein. In Arabidopsis thaliana (Mouse-ear cress), this protein is Dehydrodolichyl diphosphate synthase 6.